The sequence spans 339 residues: Trace amine-associated receptor 1 (339 aa).

Residues 1-24 (MMPFCHNIINISCVKNNWSNDVRA) lie on the Extracellular side of the membrane. Cystine bridges form between Cys-5–Cys-178, Cys-13–Cys-88, and Cys-96–Cys-182. 2 N-linked (GlcNAc...) asparagine glycosylation sites follow: Asn-10 and Asn-17. Residues 25–49 (SLYSLMVLIILTTLVGNLIVIVSIS) form a helical membrane-spanning segment. The Cytoplasmic portion of the chain corresponds to 50 to 59 (HFKQLHTPTN). The chain crosses the membrane as a helical span at residues 60–81 (WLIHSMATVDFLLGCLVMPYSM). At 82–96 (VRSAEHCWYFGEVFC) the chain is on the extracellular side. A helical membrane pass occupies residues 97–119 (KIHTSTDIMLSSASIFHLSFISI). Asp-103 contributes to the 2-phenylethylamine binding site. At 120–139 (DRYYAVCDPLRYKAKMNILV) the chain is on the cytoplasmic side. The helical transmembrane segment at 140–161 (ICVMIFISWSVPAVFAFGMIFL) threads the bilayer. Residues 162–188 (ELNFKGAEEIYYKHVHCRGGCSVFFSK) are Extracellular-facing. The interval 175–186 (HVHCRGGCSVFF) is extracellular Loop 2 (ECL2). Residues 189–211 (ISGVLTFMTSFYIPGSIMLCVYY) traverse the membrane as a helical segment. Topologically, residues 212-249 (RIYLIAKEQARLISDANQKLQIGLEMKNGISQSKERKA) are cytoplasmic. The chain crosses the membrane as a helical span at residues 250–273 (VKTLGIVMGVFLICWCPFFICTVM). Residues 274-286 (DPFLHYIIPPTLN) are Extracellular-facing. A helical transmembrane segment spans residues 287 to 307 (DVLIWFGYLNSTFNPMVYAFF). Residues 308 to 339 (YPWFRKALKMMLFGKIFQKDSSRCKLFLELSS) lie on the Cytoplasmic side of the membrane.

The protein belongs to the G-protein coupled receptor 1 family. Expressed at low level in both the central and peripheral nervous system. Moderately expressed in stomach. Low levels in amygdala, kidney, and lung, and small intestine. Trace amounts in cerebellum, dorsal root ganglia, hippocampus, hypothalamus, liver, medulla, pancreas, pituitary, pontine reticular formation, prostate, skeletal muscle and spleen.

It localises to the endomembrane system. The protein localises to the endoplasmic reticulum membrane. It is found in the cell membrane. Activated by SEP-363856 small molecule: IHCH-7179 acts both as an agonist activator for HTR1A and TAAR1. In terms of biological role, intracellular G-protein coupled receptor for trace amines, which recognizes endogenous amine-containing metabolites such as beta-phenylethylamine (beta-PEA), 3-iodothyronamine (T1AM), isoamylamine (IAA), cadaverine (CAD), cyclohexylamine (CHA), p-tyramine (p-TYR), trimethylamine (TMA), octopamine and tryptamine. Also functions as a receptor for various drugs and psychoactive substances, such as amphetamine and methamphetamine. Unresponsive to classical biogenic amines, such as epinephrine and histamine and only partially activated by dopamine and serotonin. Expressed in both the central and peripheral nervous system: TAAR1 activation regulates the activity of several neurotransmitter signaling pathways by (1) decreasing the basal firing rates of the neurons involved and by (2) lowering the sensitivity of receptors to neurotransmitters. Ligand binding causes a conformation change that triggers signaling via guanine nucleotide-binding proteins (G proteins) and modulates the activity of downstream effectors. TAAR1 is coupled with different G(i)/G(o)-, G(s)- or G(q)/G(11) classes of G alpha proteins depending on the ligand. CAD-binding is coupled to G(i)/G(o) G alpha proteins and mediates inhibition of adenylate cyclase activity. T1AM- or beta-PEA-binding is coupled to G(s) G alpha proteins and mediates activation of adenylate cyclase activity. CHA- or IAA-binding is coupled to G(q)/G(11) G alpha proteins and activates phospholipase C-beta, releasing diacylglycerol (DAG) and inositol 1,4,5-trisphosphate (IP3) second messengers. TMA-binding is coupled with all three G(i)/G(o)-, G(s)- or G(q)/G(11) G alpha protein subtypes. Amphetamine-binding is coupled with G(s)- or G(12)/G(13) G alpha protein subtypes. This is Trace amine-associated receptor 1 from Homo sapiens (Human).